The chain runs to 282 residues: 5'-nucleotidase SurE (282 aa).

A divalent metal cation-binding residues include Asp-12, Asp-13, Ser-43, and Asn-98.

Belongs to the SurE nucleotidase family. It depends on a divalent metal cation as a cofactor.

Its subcellular location is the cytoplasm. The catalysed reaction is a ribonucleoside 5'-phosphate + H2O = a ribonucleoside + phosphate. In terms of biological role, nucleotidase that shows phosphatase activity on nucleoside 5'-monophosphates. In Hyperthermus butylicus (strain DSM 5456 / JCM 9403 / PLM1-5), this protein is 5'-nucleotidase SurE.